Consider the following 221-residue polypeptide: tRNA (guanine-N(7)-)-methyltransferase (221 aa).

Residues glutamate 43, glutamate 68, and aspartate 123 each contribute to the S-adenosyl-L-methionine site. The active site involves aspartate 123. Substrate-binding positions include lysine 127, aspartate 159, and 199–202; that span reads TEYE.

This sequence belongs to the class I-like SAM-binding methyltransferase superfamily. TrmB family.

It catalyses the reaction guanosine(46) in tRNA + S-adenosyl-L-methionine = N(7)-methylguanosine(46) in tRNA + S-adenosyl-L-homocysteine. The protein operates within tRNA modification; N(7)-methylguanine-tRNA biosynthesis. In terms of biological role, catalyzes the formation of N(7)-methylguanine at position 46 (m7G46) in tRNA. The sequence is that of tRNA (guanine-N(7)-)-methyltransferase from Mycoplasma mycoides subsp. mycoides SC (strain CCUG 32753 / NCTC 10114 / PG1).